The sequence spans 257 residues: Myosin-8 (257 aa).

Positions 1-257 form a coiled coil; sequence RAALQAEIEE…REVHTKISAE (257 aa). Phosphoserine is present on residues Ser33, Ser45, and Ser58.

In terms of assembly, muscle myosin is a hexameric protein that consists of 2 heavy chain subunits (MHC), 2 alkali light chain subunits (MLC) and 2 regulatory light chain subunits (MLC-2).

It localises to the cytoplasm. It is found in the myofibril. In terms of biological role, muscle contraction. This Rattus norvegicus (Rat) protein is Myosin-8 (Myh8).